Reading from the N-terminus, the 3051-residue chain is Biorientation of chromosomes in cell division protein 1-like 1 (3051 aa).

Over residues 1-33 (MATNPQPQPPPPAPPPPPPQPQPQPPPPPPGPG) the composition is skewed to pro residues. 5 disordered regions span residues 1 to 47 (MATN…AGAG), 164 to 197 (HKEEGSGNTAPDDEKPDTSLITQGVPTPGPSANV), 215 to 288 (ASAA…CPVE), 301 to 393 (ILLN…KEDF), and 411 to 469 (VHTS…VRHA). A compositionally biased stretch (gly residues) spans 34–47 (AGPGAGGAGGAGAG). Low complexity predominate over residues 215–227 (ASAARASTETSNA). Positions 246–263 (STDKERTSEDMADKEKST) are enriched in basic and acidic residues. Ser266 bears the Phosphoserine mark. A compositionally biased stretch (basic and acidic residues) spans 312 to 393 (SEQKNKSTDK…KTVEGTKEDF (82 aa)). Residues 418–443 (SFEEDTEEEVVTSDSMEEGEITSDDE) are compositionally biased toward acidic residues. An N6-acetyllysine modification is found at Lys473. Residues Ser482 and Ser484 each carry the phosphoserine modification. Composition is skewed to basic and acidic residues over residues 497–527 (IAKEKEERLLRRQINREKLEEKRKQKAEKTK), 549–570 (LEPKAARIKEVLKERKVLEKKV), and 580–653 (SRNV…LERE). The interval 497–1203 (IAKEKEERLL…EKHADHRSTL (707 aa)) is disordered. Ser635 and Ser659 each carry phosphoserine. Residues Thr660 and Thr733 each carry the phosphothreonine modification. 6 stretches are compositionally biased toward basic and acidic residues: residues 671 to 772 (TDTR…EENI), 804 to 852 (KDGK…KIQK), 866 to 878 (RRSESYSEDKCDM), 940 to 966 (KPDKEKNTEENDSEKQRKSKVEDKPFE), 984 to 1021 (TQKDSSHRAKLPLAKEKYKSDKDSTSTRLERKLSDGHK), and 1028 to 1075 (SSKD…ENRR). Ser1077 is modified (phosphoserine). Composition is skewed to polar residues over residues 1092-1103 (NTLSTPSGSSLQ) and 1135-1148 (SKTQDNRNNNSQQD). Phosphoserine is present on residues Ser1145 and Ser1318. Position 1354 is a phosphothreonine (Thr1354). Disordered stretches follow at residues 1456-1550 (KLKH…QSEV), 1700-1725 (GSISSEEVDGSQGNMMRMGPKKETEG), and 1760-1890 (VVLG…TGLG). The span at 1465-1479 (KVKDISIDVERRNEN) shows a compositional bias: basic and acidic residues. Positions 1482–1504 (VDTSAGSGSAPSVLHQRNGQTED) are enriched in polar residues. Phosphoserine occurs at positions 1531, 1701, and 1710. Phosphoserine is present on residues Ser2013, Ser2025, Ser2128, and Ser2203. Disordered stretches follow at residues 2189 to 2210 (DFEGPMPSAPPEAESPLASTSK), 2258 to 2285 (TSSVEDCEGPVSSAVPQEEGDPSVTPAE), 2403 to 2447 (STEE…FAGR), 2472 to 2519 (EDKS…AKDP), 2615 to 2635 (DQASAEKTGDDNSTRKSFPEE), and 2717 to 3051 (VENS…KAKR). A compositionally biased stretch (low complexity) spans 2191–2207 (EGPMPSAPPEAESPLAS). Residues 2428 to 2439 (AEKEEKHGKECP) show a composition bias toward basic and acidic residues. At Ser2475 the chain carries Phosphoserine. Positions 2483 to 2492 (GSSTASYSAG) are enriched in low complexity. A phosphoserine mark is found at Ser2501 and Ser2618. 3 stretches are compositionally biased toward basic and acidic residues: residues 2621–2633 (KTGDDNSTRKSFP), 2724–2746 (TNEEIHSESYNKGEISSGRKDNA), and 2754–2767 (VEADPKEVEEEERH). The span at 2780–2789 (SEDEPDDNPD) shows a compositional bias: acidic residues. A compositionally biased stretch (basic and acidic residues) spans 2791–2822 (LDSRIETAQRQCPETEPHDTKEENSRDLEELP). Residues 2823–2834 (KTSSETNSTTSR) show a composition bias toward polar residues. The segment covering 2848–2864 (TGEKPEQNDDDTIKSQE) has biased composition (basic and acidic residues). Positions 2871 to 2880 (IKRKRGRPRK) are enriched in basic residues. The segment at residues 2872 to 2884 (KRKRGRPRKYPVE) is a DNA-binding region (a.T hook). Over residues 2896–2910 (DTGIVTVEQSPSSSK) the composition is skewed to polar residues. Phosphoserine occurs at positions 2905 and 2907. Residues 2944 to 2953 (VRRRGRKPKR) are compositionally biased toward basic residues. Ser2954 carries the post-translational modification Phosphoserine. Thr2956 carries the post-translational modification Phosphothreonine. Phosphoserine occurs at positions 2958, 2964, and 2973. Glycyl lysine isopeptide (Lys-Gly) (interchain with G-Cter in ubiquitin) cross-links involve residues Lys2981 and Lys2982. The segment covering 2985-2998 (ESDEEEEEEEEDEP) has biased composition (acidic residues). 2 positions are modified to phosphoserine: Ser2986 and Ser3019. Residues 3000–3020 (GATTRSTTRSEAQRSKTQLSP) show a composition bias toward polar residues. Positions 3039–3051 (QRVEEAPVKKAKR) are enriched in basic and acidic residues.

Belongs to the BOD1 family. As to quaternary structure, interacts (via COMPASS-Shg1 domain) with SETD1A at stalled replication forks; this interaction mediates FANCD2-dependent nucleosome remodeling at reversed forks protecting them from nucleolytic degradation.

The protein resides in the chromosome. In terms of biological role, component of the fork protection machinery required to protect stalled/damaged replication forks from uncontrolled DNA2-dependent resection. Acts by stabilizing RAD51 at stalled replication forks and protecting RAD51 nucleofilaments from the antirecombinogenic activities of FBH1 and BLM. Does not regulate spindle orientation. The chain is Biorientation of chromosomes in cell division protein 1-like 1 from Homo sapiens (Human).